Here is a 256-residue protein sequence, read N- to C-terminus: Fat body protein 2 (256 aa).

NAD(+) is bound at residue V10–M34. Position 138 (S138) interacts with substrate. Y151 (proton acceptor) is an active-site residue.

It belongs to the short-chain dehydrogenases/reductases (SDR) family.

The chain is Fat body protein 2 (Fbp2) from Drosophila melanogaster (Fruit fly).